Reading from the N-terminus, the 528-residue chain is Glutamyl-tRNA(Gln) amidotransferase subunit B, mitochondrial (528 aa).

This sequence belongs to the GatB/GatE family. GatB subfamily. As to quaternary structure, subunit of the heterotrimeric GatFAB amidotransferase (AdT) complex, composed of A, B and F subunits.

It is found in the mitochondrion. It carries out the reaction L-glutamyl-tRNA(Gln) + L-glutamine + ATP + H2O = L-glutaminyl-tRNA(Gln) + L-glutamate + ADP + phosphate + H(+). Functionally, allows the formation of correctly charged Gln-tRNA(Gln) through the transamidation of misacylated Glu-tRNA(Gln) in the mitochondria. The reaction takes place in the presence of glutamine and ATP through an activated gamma-phospho-Glu-tRNA(Gln). This Clavispora lusitaniae (strain ATCC 42720) (Yeast) protein is Glutamyl-tRNA(Gln) amidotransferase subunit B, mitochondrial.